The sequence spans 188 residues: Probable nicotinate-nucleotide adenylyltransferase (188 aa).

The protein belongs to the NadD family.

The catalysed reaction is nicotinate beta-D-ribonucleotide + ATP + H(+) = deamido-NAD(+) + diphosphate. It participates in cofactor biosynthesis; NAD(+) biosynthesis; deamido-NAD(+) from nicotinate D-ribonucleotide: step 1/1. Catalyzes the reversible adenylation of nicotinate mononucleotide (NaMN) to nicotinic acid adenine dinucleotide (NaAD). In Listeria welshimeri serovar 6b (strain ATCC 35897 / DSM 20650 / CCUG 15529 / CIP 8149 / NCTC 11857 / SLCC 5334 / V8), this protein is Probable nicotinate-nucleotide adenylyltransferase.